The primary structure comprises 198 residues: Na(+)-translocating NADH-quinone reductase subunit E (198 aa).

A run of 6 helical transmembrane segments spans residues S11–V31, F39–V59, F77–I97, G110–V130, I140–I160, and L176–V196.

This sequence belongs to the NqrDE/RnfAE family. Composed of six subunits; NqrA, NqrB, NqrC, NqrD, NqrE and NqrF.

Its subcellular location is the cell inner membrane. The catalysed reaction is a ubiquinone + n Na(+)(in) + NADH + H(+) = a ubiquinol + n Na(+)(out) + NAD(+). Its function is as follows. NQR complex catalyzes the reduction of ubiquinone-1 to ubiquinol by two successive reactions, coupled with the transport of Na(+) ions from the cytoplasm to the periplasm. NqrA to NqrE are probably involved in the second step, the conversion of ubisemiquinone to ubiquinol. In Photobacterium profundum (strain SS9), this protein is Na(+)-translocating NADH-quinone reductase subunit E.